Reading from the N-terminus, the 242-residue chain is Demethylmenaquinone methyltransferase (242 aa).

S-adenosyl-L-methionine contacts are provided by Thr-74 and Asp-93.

The protein belongs to the class I-like SAM-binding methyltransferase superfamily. MenG/UbiE family.

The enzyme catalyses a 2-demethylmenaquinol + S-adenosyl-L-methionine = a menaquinol + S-adenosyl-L-homocysteine + H(+). It functions in the pathway quinol/quinone metabolism; menaquinone biosynthesis; menaquinol from 1,4-dihydroxy-2-naphthoate: step 2/2. Its function is as follows. Methyltransferase required for the conversion of demethylmenaquinol (DMKH2) to menaquinol (MKH2). This is Demethylmenaquinone methyltransferase from Chlorobaculum tepidum (strain ATCC 49652 / DSM 12025 / NBRC 103806 / TLS) (Chlorobium tepidum).